The sequence spans 350 residues: N(4)-bis(aminopropyl)spermidine synthase (350 aa).

It belongs to the branched-chain polyamine synthase family.

The protein resides in the cytoplasm. The enzyme catalyses 2 S-adenosyl 3-(methylsulfanyl)propylamine + spermidine = N(4)-bis(aminopropyl)spermidine + 2 S-methyl-5'-thioadenosine + 2 H(+). Its pathway is amine and polyamine biosynthesis. Involved in the biosynthesis of branched-chain polyamines, which support the growth of thermophiles under high-temperature conditions. Catalyzes the sequential condensation of spermidine with the aminopropyl groups of decarboxylated S-adenosylmethionines to produce N(4)-bis(aminopropyl)spermidine via N(4)-aminopropylspermidine. This Methanocaldococcus jannaschii (strain ATCC 43067 / DSM 2661 / JAL-1 / JCM 10045 / NBRC 100440) (Methanococcus jannaschii) protein is N(4)-bis(aminopropyl)spermidine synthase.